A 710-amino-acid polypeptide reads, in one-letter code: uncharacterized protein (710 aa).

The segment at 1–40 (MSESDGAFKSPSLPPSHHAPAPMSPEKIRAPAEQMDGPVE) is disordered. Low complexity predominate over residues 15-25 (PSHHAPAPMSP). Residues 108-165 (VVIGRIKPGCDLLMEHPSISRYHCILQYGNDKMSKTGKGWHIFELGSTHGSRMNKKRL) enclose the FHA domain. Coiled-coil stretches lie at residues 206-240 (TEMKLRKHKKELEAKLRAAAAQEMIDDEKREKEEE), 409-440 (ETDTYESLCRKLEESKKEIIECQKHLDELSAG), and 471-502 (AKTKMEKSKWRQKLMAATHESQKLEKLVKIAK). A disordered region spans residues 230–250 (IDDEKREKEEEGCGWGMDYGE). Disordered stretches follow at residues 535–560 (EIDQTPSQGPGPSTSATLPATVAPTS), 591–619 (KNSLPAVDEPSSVKDEVSEETPQKEAFGS), and 671–710 (EDYGAGVEDRDEKYSTWMPPNADQSEAKQDALRAKFAGRY). The segment covering 538–560 (QTPSQGPGPSTSATLPATVAPTS) has biased composition (polar residues). The stretch at 613–661 (QKEAFGSKVQKRVAQWEEELEAEKEELAKKQKLEAEEEAKKKVQRVRRR) forms a coiled coil.

This is an uncharacterized protein from Caenorhabditis elegans.